The primary structure comprises 868 residues: mRNA-capping enzyme (868 aa).

Lys-282 serves as the catalytic N6-GMP-lysine intermediate. The region spanning Gly-594–Asn-868 is the mRNA cap 0 methyltransferase domain. Residues Lys-607, Gly-624, Asp-646, and Leu-710 to Ile-712 each bind S-adenosyl-L-methionine.

In the N-terminal section; belongs to the dsDNA virus mRNA guanylyltransferase family. It in the C-terminal section; belongs to the class I-like SAM-binding methyltransferase superfamily. mRNA cap 0 methyltransferase family. Part of the viral DNA-directed RNA polymerase that consists of 8 polII-like subunits (RPB1, RPB2, RPB3, RPB5, RPB6, RPB7, RPB9, RPB10), a capping enzyme and a termination factor.

It localises to the virion. The catalysed reaction is a 5'-end triphospho-ribonucleoside in mRNA + H2O = a 5'-end diphospho-ribonucleoside in mRNA + phosphate + H(+). The enzyme catalyses a 5'-end diphospho-ribonucleoside in mRNA + GTP + H(+) = a 5'-end (5'-triphosphoguanosine)-ribonucleoside in mRNA + diphosphate. It carries out the reaction a 5'-end (5'-triphosphoguanosine)-ribonucleoside in mRNA + S-adenosyl-L-methionine = a 5'-end (N(7)-methyl 5'-triphosphoguanosine)-ribonucleoside in mRNA + S-adenosyl-L-homocysteine. Its pathway is mRNA processing; mRNA capping. Probably catalyzes the second reaction in the mRNA cap formation pathway. Forms a covalent complex with GTP. The chain is mRNA-capping enzyme from African swine fever virus (isolate Tick/South Africa/Pretoriuskop Pr4/1996) (ASFV).